Reading from the N-terminus, the 239-residue chain is Cyclo(L-leucyl-L-phenylalanyl) synthase (239 aa).

Ser-37 functions as the Nucleophile in the catalytic mechanism. Substrate contacts are provided by residues Asn-40, 178–182 (YVLAE), and Tyr-202.

This sequence belongs to the CDPS family. As to quaternary structure, monomer.

The catalysed reaction is L-phenylalanyl-tRNA(Phe) + L-leucyl-tRNA(Leu) = cyclo(L-phenylalanyl-L-leucyl) + tRNA(Phe) + tRNA(Leu) + H(+). Its function is as follows. Involved in the biosynthesis of albonoursin (cyclo[(alpha,beta-dehydro-Phe)-(alpha,beta-dehydro-Leu)]), an antibacterial peptide. It uses activated amino acids in the form of aminoacyl-tRNAs (aa-tRNAs) as substrates to catalyze the ATP-independent formation of cyclodipeptides which are intermediates in diketopiperazine (DKP) biosynthetic pathways. Catalyzes the formation of cyclo(L-Phe-L-Leu) (cFL) as major products from L-L-phenylalanyl-tRNA(Phe) and L-leucyl-tRNA(Leu). AlbC can also incorporate various nonpolar residues, such as L-phenylalanine, L-leucine, L-tyrosine and L-methionine, and to a much lesser extent L-alanine and L-valine, into cyclodipeptides. Indeed, ten possible cyclodipeptides composed of L-phenylalanine, L-leucine, L-tyrosine and L-methionine are all synthesized to detectable amounts by AlbC. The chain is Cyclo(L-leucyl-L-phenylalanyl) synthase (albC) from Streptomyces noursei (Streptomyces albulus).